A 919-amino-acid polypeptide reads, in one-letter code: Beta-galactosidase 15 (919 aa).

The N-terminal stretch at 1–31 (MAASRGPPLLGFRALALALLLAILLLLGCSA) is a signal peptide. The N-linked (GlcNAc...) asparagine glycan is linked to asparagine 63. Residue glutamate 220 is the Proton donor of the active site. Glutamate 289 acts as the Nucleophile in catalysis. Residues asparagine 412, asparagine 530, asparagine 546, and asparagine 855 are each glycosylated (N-linked (GlcNAc...) asparagine). Residues 822 to 907 (NAATPELRLQ…KDLAVEAKCS (86 aa)) enclose the SUEL-type lectin domain.

This sequence belongs to the glycosyl hydrolase 35 family.

Its subcellular location is the secreted. The protein localises to the extracellular space. It localises to the apoplast. It carries out the reaction Hydrolysis of terminal non-reducing beta-D-galactose residues in beta-D-galactosides.. This is Beta-galactosidase 15 from Oryza sativa subsp. japonica (Rice).